The primary structure comprises 520 residues: MTWNKAPAADAEAGGGGDTGHARLRELGYKQELKRDLSVLSNFAFSFSIISVLTGITTLYNTGLSFGGPATMTFGWFVAGAFTMTVGLSMAEICSSFPTSGGLYYWSARLSGKRWAPFASWITGWFNIVGQWAVTTSVDFSLAQLIQVIILLSTGGNNGGGYMASKYVVIAFHAAILLSHAAINSLPITWLSFFGQFAAAWNMLGVFVLMIAVPTVATERASAKFVFTHFNTENNAGIHSNFYIFVLGLLMSQYTLTGYDASAHMTEETKNADRNGPIGIISAIGISIIVGWGYILGITFAVKDIPYLLNPENDAGGYAIAEVFYLAFKSRYGSGIGGIICLGIVAVAIYFCGMSSVTSNSRMAYAFSRDGAMPLSSVWHKVNKHEVPINAVWLSALISLCMALPSLGSLVAFQAMVSIATIGLYVAYALPILFRVTLARKHFVPGPFNLGRCGVAVGWAAVLWVATITVLFSLPVSYPVTKDTLNYTPVAVGGLFLLVLSSWLLSARHWFKGPITNLDG.

Transmembrane regions (helical) follow at residues 39–59, 74–94, 118–138, 168–188, 193–213, 236–256, 278–298, 334–354, 387–407, 410–430, 454–474, and 487–507; these read VLSNFAFSFSIISVLTGITTL, FGWFVAGAFTMTVGLSMAEIC, FASWITGWFNIVGQWAVTTSV, VVIAFHAAILLSHAAINSLPI, FFGQFAAAWNMLGVFVLMIAV, AGIHSNFYIFVLGLLMSQYTL, IGIISAIGISIIVGWGYILGI, SGIGGIICLGIVAVAIYFCGM, VPINAVWLSALISLCMALPSL, LVAFQAMVSIATIGLYVAYAL, GVAVGWAAVLWVATITVLFSL, and YTPVAVGGLFLLVLSSWLLSA.

It belongs to the amino acid-polyamine-organocation (APC) superfamily. Amino acid/choline transporter (ACT) (TC 2.A.3.4) family.

The protein localises to the membrane. May be involved in the transport of amino acids. In Oryza sativa subsp. japonica (Rice), this protein is Amino-acid permease BAT1 homolog (BAT1).